Here is a 266-residue protein sequence, read N- to C-terminus: Dihydropteroate synthase (266 aa).

The 249-residue stretch at 12–260 (AAIMGILNVT…DVKANQDIVA (249 aa)) folds into the Pterin-binding domain. N19 serves as a coordination point for Mg(2+). Residues T59, D93, N112, D176, K212, and 248–250 (RVH) contribute to the (7,8-dihydropterin-6-yl)methyl diphosphate site.

Belongs to the DHPS family. In terms of assembly, homodimer or homotrimer. Requires Mg(2+) as cofactor.

It carries out the reaction (7,8-dihydropterin-6-yl)methyl diphosphate + 4-aminobenzoate = 7,8-dihydropteroate + diphosphate. Its pathway is cofactor biosynthesis; tetrahydrofolate biosynthesis; 7,8-dihydrofolate from 2-amino-4-hydroxy-6-hydroxymethyl-7,8-dihydropteridine diphosphate and 4-aminobenzoate: step 1/2. In terms of biological role, catalyzes the condensation of para-aminobenzoate (pABA) with 6-hydroxymethyl-7,8-dihydropterin diphosphate (DHPt-PP) to form 7,8-dihydropteroate (H2Pte), the immediate precursor of folate derivatives. The chain is Dihydropteroate synthase (folP) from Streptococcus pyogenes serotype M6 (strain ATCC BAA-946 / MGAS10394).